The chain runs to 498 residues: Alpha-amylase A (498 aa).

The signal sequence occupies residues Met-1–Ala-21. A disulfide bridge links Cys-51 with Cys-59. The substrate site is built by Gln-56 and Trp-104. Asn-142 provides a ligand contact to Ca(2+). His-143 is a substrate binding site. A disulfide bridge connects residues Cys-171 and Cys-185. Residues Glu-183 and Asp-196 each contribute to the Ca(2+) site. Asn-218 is a glycosylation site (N-linked (GlcNAc...) asparagine). Arg-225 contacts substrate. Ca(2+) contacts are provided by Asp-227, His-231, and Glu-251. Catalysis depends on Asp-227, which acts as the Nucleophile. Lys-230–His-231 serves as a coordination point for substrate. Glu-251 (proton donor) is an active-site residue. Gly-255 is a binding site for substrate. A disulfide bond links Cys-261 and Cys-304. Substrate is bound by residues Asp-318 and Arg-365. Residues Cys-461 and Cys-496 are joined by a disulfide bond.

Belongs to the glycosyl hydrolase 13 family. Requires Ca(2+) as cofactor.

It catalyses the reaction Endohydrolysis of (1-&gt;4)-alpha-D-glucosidic linkages in polysaccharides containing three or more (1-&gt;4)-alpha-linked D-glucose units.. This is Alpha-amylase A (amyA) from Aspergillus awamori (Black koji mold).